Reading from the N-terminus, the 190-residue chain is Protein GrpE (190 aa).

The segment covering 1-18 has biased composition (polar residues); that stretch reads MTETPNTSSEEIQTSEPS. Residues 1 to 21 are disordered; it reads MTETPNTSSEEIQTSEPSPDN.

This sequence belongs to the GrpE family. Homodimer.

It localises to the cytoplasm. Its function is as follows. Participates actively in the response to hyperosmotic and heat shock by preventing the aggregation of stress-denatured proteins, in association with DnaK and GrpE. It is the nucleotide exchange factor for DnaK and may function as a thermosensor. Unfolded proteins bind initially to DnaJ; upon interaction with the DnaJ-bound protein, DnaK hydrolyzes its bound ATP, resulting in the formation of a stable complex. GrpE releases ADP from DnaK; ATP binding to DnaK triggers the release of the substrate protein, thus completing the reaction cycle. Several rounds of ATP-dependent interactions between DnaJ, DnaK and GrpE are required for fully efficient folding. This is Protein GrpE from Chlamydia trachomatis serovar L2b (strain UCH-1/proctitis).